Here is a 112-residue protein sequence, read N- to C-terminus: Mitochondrial import inner membrane translocase subunit TIM14-3 (112 aa).

An N-acetylalanine modification is found at alanine 2. Residues 6–28 (IAGAAVAAAAVAGRYGILAWQAF) traverse the membrane as a helical segment. The 60-residue stretch at 53-112 (EAALILGVRESVVADKVKEAHRRVMVANHPDAGGSHYLASKINEAKDMMLGKSNNSGSAF) folds into the J domain.

It belongs to the TIM14 family. Probable component of the PAM complex at least composed of a mitochondrial HSP70 protein, TIMM44 and TIMM14. The complex interacts with the TIMM23 component of the TIM17:23 complex.

The protein resides in the mitochondrion. It localises to the mitochondrion inner membrane. Functionally, component of the PAM complex, a complex required for the translocation of transit peptide-containing proteins from the inner membrane into the mitochondrial matrix in an ATP-dependent manner. The sequence is that of Mitochondrial import inner membrane translocase subunit TIM14-3 (TIM14-3) from Arabidopsis thaliana (Mouse-ear cress).